A 518-amino-acid polypeptide reads, in one-letter code: GMP synthase [glutamine-hydrolyzing] (518 aa).

One can recognise a Glutamine amidotransferase type-1 domain in the interval T8–N201. C85 (nucleophile) is an active-site residue. Catalysis depends on residues H175 and E177. The GMPS ATP-PPase domain occupies W202 to R393. S229–S235 lines the ATP pocket.

As to quaternary structure, homodimer.

It carries out the reaction XMP + L-glutamine + ATP + H2O = GMP + L-glutamate + AMP + diphosphate + 2 H(+). It functions in the pathway purine metabolism; GMP biosynthesis; GMP from XMP (L-Gln route): step 1/1. Catalyzes the synthesis of GMP from XMP. This chain is GMP synthase [glutamine-hydrolyzing], found in Bartonella henselae (strain ATCC 49882 / DSM 28221 / CCUG 30454 / Houston 1) (Rochalimaea henselae).